A 208-amino-acid chain; its full sequence is FMN-dependent NADH:quinone oxidoreductase (208 aa).

FMN-binding positions include S9 and 15 to 17; that span reads SHS.

The protein belongs to the azoreductase type 1 family. In terms of assembly, homodimer. It depends on FMN as a cofactor.

The catalysed reaction is 2 a quinone + NADH + H(+) = 2 a 1,4-benzosemiquinone + NAD(+). The enzyme catalyses N,N-dimethyl-1,4-phenylenediamine + anthranilate + 2 NAD(+) = 2-(4-dimethylaminophenyl)diazenylbenzoate + 2 NADH + 2 H(+). Its function is as follows. Quinone reductase that provides resistance to thiol-specific stress caused by electrophilic quinones. Functionally, also exhibits azoreductase activity. Catalyzes the reductive cleavage of the azo bond in aromatic azo compounds to the corresponding amines. The protein is FMN-dependent NADH:quinone oxidoreductase of Bordetella petrii (strain ATCC BAA-461 / DSM 12804 / CCUG 43448).